We begin with the raw amino-acid sequence, 603 residues long: NADH-ubiquinone oxidoreductase chain 5 (603 aa).

A run of 16 helical transmembrane segments spans residues 4 to 24, 38 to 58, 87 to 107, 122 to 142, 144 to 160, 171 to 191, 211 to 233, 241 to 261, 272 to 292, 301 to 320, 325 to 347, 370 to 390, 405 to 422, 457 to 477, 482 to 502, and 582 to 602; these read YATM…GALI, SIIA…MCLD, MTFI…SLWY, LIFL…QLFI, WEGV…WWYA, AILY…WFLL, TPLL…HPWL, TPVS…FLLI, LIQT…AVCA, IVAF…IGIN, AFLH…GSII, STSL…TGFY, NAWA…TSAY, LTIG…PMST, IPLY…LTAL, and GMIK…LLLI.

This sequence belongs to the complex I subunit 5 family. As to quaternary structure, core subunit of respiratory chain NADH dehydrogenase (Complex I) which is composed of 45 different subunits.

Its subcellular location is the mitochondrion inner membrane. The catalysed reaction is a ubiquinone + NADH + 5 H(+)(in) = a ubiquinol + NAD(+) + 4 H(+)(out). Its function is as follows. Core subunit of the mitochondrial membrane respiratory chain NADH dehydrogenase (Complex I) which catalyzes electron transfer from NADH through the respiratory chain, using ubiquinone as an electron acceptor. Essential for the catalytic activity and assembly of complex I. This chain is NADH-ubiquinone oxidoreductase chain 5 (MT-ND5), found in Pan troglodytes (Chimpanzee).